The following is a 281-amino-acid chain: Urease accessory protein UreD (281 aa).

It belongs to the UreD family. UreD, UreF and UreG form a complex that acts as a GTP-hydrolysis-dependent molecular chaperone, activating the urease apoprotein by helping to assemble the nickel containing metallocenter of UreC. The UreE protein probably delivers the nickel.

The protein resides in the cytoplasm. Required for maturation of urease via the functional incorporation of the urease nickel metallocenter. This Pseudomonas savastanoi pv. phaseolicola (strain 1448A / Race 6) (Pseudomonas syringae pv. phaseolicola (strain 1448A / Race 6)) protein is Urease accessory protein UreD.